We begin with the raw amino-acid sequence, 314 residues long: tRNA dimethylallyltransferase (314 aa).

13 to 20 serves as a coordination point for ATP; sequence GPTAVGKT. Position 15–20 (15–20) interacts with substrate; the sequence is TAVGKT. The interaction with substrate tRNA stretch occupies residues 38–41; sequence DSMQ.

Belongs to the IPP transferase family. In terms of assembly, monomer. Mg(2+) is required as a cofactor.

It carries out the reaction adenosine(37) in tRNA + dimethylallyl diphosphate = N(6)-dimethylallyladenosine(37) in tRNA + diphosphate. Catalyzes the transfer of a dimethylallyl group onto the adenine at position 37 in tRNAs that read codons beginning with uridine, leading to the formation of N6-(dimethylallyl)adenosine (i(6)A). The sequence is that of tRNA dimethylallyltransferase from Bacillus subtilis (strain 168).